Consider the following 580-residue polypeptide: Serine/threonine-protein kinase PINK1, mitochondrial (580 aa).

A mitochondrion-targeting transit peptide spans 1 to 77 (MAVRQALGRG…RFFRQSVAGL (77 aa)). Residues 78 to 93 (AARIQRQFMVRARGGA) lie on the Mitochondrial intermembrane side of the membrane. A helical transmembrane segment spans residues 94 to 110 (GPCGRAVFLAFGLGLGL). The tract at residues 111–117 (IEEKQAE) is required for outer membrane localization. The Cytoplasmic portion of the chain corresponds to 111 to 580 (IEEKQAEGRR…LLLSSWRAAP (470 aa)). The Protein kinase domain maps to 156-510 (YLIGQAIGKG…LAANVLHLSL (355 aa)). Residues 162–170 (IGKGCNAAV) and lysine 186 contribute to the ATP site. Serine 227 is modified (phosphoserine; by autocatalysis). Aspartate 361 acts as the Proton acceptor in catalysis. Position 401 is a phosphoserine; by autocatalysis (serine 401).

The protein belongs to the protein kinase superfamily. Ser/Thr protein kinase family. In terms of assembly, upon mitochondrial depolarization, it forms a supercomplex with TOM and TIM23 complexes. PINK1-TOM-TIM23 supercomplex formation requires PINK1 interaction with TOMM20 and TOMM70 and is critical for PINK1 stabilization at the outer mitochondrial membrane, kinase activation and downstream mitophagy. Upon mitochondrial depolarization, interacts with TIMM23; the interaction is required for PINK1 accumulation at the outer mitochondrial membrane, kinase activation by autophosphorylation and PRKN recruitement to mitochondria. Interacts with PRKN. Interacts with FBXO7. Forms a complex with PRKN and PARK7. Interacts with NENF. Requires Mg(2+) as cofactor. In terms of processing, proteolytically cleaved. In healthy cells, the precursor is continuously imported into the inner mitochondrial membrane (IMM), where it is proteolytically cleaved by mitochondrial-processing peptidase (MPP) and then undergoes further proteolytic cleavage by PARL or AFG3L2 to give rise to the 52 kDa short form. The 52 kDa short form is then released into the cytosol where it rapidly undergoes proteasome-dependent degradation. In unhealthy cells, when cellular stress conditions lead to the loss of mitochondrial membrane potential, mitochondrial import is impaired leading to the precursor accumulating on the outer mitochondrial membrane (OMM). If accumulation at the OMM fails and it is imported into the depolarized mitochondria, it undergoes cleavage by the IMM protease OMA1, promoting its subsequent degradation by the proteasome. Autophosphorylated. Loss of mitochondrial membrane potential results in the precursor accumulating on the outer mitochondrial membrane (OMM) where it is activated by autophosphorylation. Autophosphorylation at Ser-227 and Ser-401 is essential for selective recruitment of PRKN to depolarized mitochondria, via PINK1-dependent phosphorylation of ubiquitin and PRKN. High levels expressed in testis, lower levels in brain, heart, lung, liver and kidney.

The protein resides in the mitochondrion outer membrane. The protein localises to the mitochondrion inner membrane. It is found in the cytoplasm. It localises to the cytosol. The catalysed reaction is L-seryl-[protein] + ATP = O-phospho-L-seryl-[protein] + ADP + H(+). It carries out the reaction L-threonyl-[protein] + ATP = O-phospho-L-threonyl-[protein] + ADP + H(+). Its function is as follows. Serine/threonine-protein kinase which acts as a sensor of mitochondrial damage and protects against mitochondrial dysfunction during cellular stress. It phosphorylates mitochondrial proteins to coordinate mitochondrial quality control mechanisms that remove and replace dysfunctional mitochondrial components. Depending on the severity of mitochondrial damage, activity ranges from preventing apoptosis and stimulating mitochondrial biogenesis to eliminating severely damaged mitochondria via PINK1-PRKN-dependent mitophagy. When cellular stress results in irreversible mitochondrial damage, PINK1 accumulates at the outer mitochondrial membrane (OMM) where it phosphorylates pre-existing polyubiquitin chains at 'Ser-65', recruits PRKN from the cytosol to the OMM and activates PRKN by phosphorylation at 'Ser-65'. Activated PRKN then ubiquinates VDAC1 and other OMM proteins to initiate mitophagy. The PINK1-PRKN pathway also promotes fission of damaged mitochondria by phosphorylating and thus promoting the PRKN-dependent degradation of mitochondrial proteins involved in fission such as MFN2. This prevents the refusion of unhealthy mitochondria with the mitochondrial network or initiates mitochondrial fragmentation facilitating their later engulfment by autophagosomes. Also promotes mitochondrial fission independently of PRKN and ATG7-mediated mitophagy, via the phosphorylation and activation of DNM1L. Regulates motility of damaged mitochondria by promoting the ubiquitination and subsequent degradation of MIRO1 and MIRO2; in motor neurons, this likely inhibits mitochondrial intracellular anterograde transport along the axons which probably increases the chance of the mitochondria undergoing mitophagy in the soma. Required for ubiquinone reduction by mitochondrial complex I by mediating phosphorylation of complex I subunit NDUFA10. Phosphorylates LETM1, positively regulating its mitochondrial calcium transport activity. The sequence is that of Serine/threonine-protein kinase PINK1, mitochondrial (Pink1) from Mus musculus (Mouse).